The sequence spans 526 residues: Osmo-independent choline transporter BetT1 (526 aa).

Residues 1-17 are Cytoplasmic-facing; it reads MWSKRDEQKTYPPIRLN. The chain crosses the membrane as a helical span at residues 18-38; it reads PFVFWSSAISISIFGMLFVLF. Residues 39–56 are Periplasmic-facing; sequence PETSQHGLTWIQQQVNQL. The helical transmembrane segment at 57–77 threads the bilayer; the sequence is FGWYYMLVIILSLGFVAWLAF. The Cytoplasmic portion of the chain corresponds to 78–93; sequence SQVGNIPLGKAQDKPE. The chain crosses the membrane as a helical span at residues 94–114; it reads FGYLVWTSMLFSAGIGIALLY. Over 115–148 the chain is Periplasmic; it reads YGVAEPVDHFLRPPEGQGGTVEAAQNAMMYSFLH. The helical transmembrane segment at 149–169 threads the bilayer; that stretch reads WGIHGWVLYALVGVTLGYFAF. At 170–200 the chain is on the cytoplasmic side; the sequence is RRDLPLALRSALYPIFGERIHGLVGHMVDGF. A helical membrane pass occupies residues 201-221; it reads GILATIISLVTNLGIGALVMI. The Periplasmic segment spans residues 222–236; the sequence is SGISYLFPDLPNTSS. Residues 237–257 traverse the membrane as a helical segment; that stretch reads TLVVTVIMMMLVATLTTVIGI. Residues 258 to 272 lie on the Cytoplasmic side of the membrane; it reads EKGLAWLSRINLRLL. Residues 273–293 traverse the membrane as a helical segment; the sequence is YLLLLFVFLTGPTNHLLNGLV. Residues 294-323 lie on the Periplasmic side of the membrane; that stretch reads QNTGDYLSHFVQKSFDLYLYDKNATGWLAS. The chain crosses the membrane as a helical span at residues 324 to 344; sequence WTIFYWAWWIAWAPFVGMFIA. The Cytoplasmic segment spans residues 345–354; the sequence is RISKGRTIRE. Residues 355 to 375 form a helical membrane-spanning segment; that stretch reads VVLGVCLIPLGFTLAWISIFG. The Periplasmic portion of the chain corresponds to 376 to 417; that stretch reads NTAIDLILNHGQQIIGSLVIQDPALSLFKLLEYLPFHPYVAG. The helical transmembrane segment at 418–438 threads the bilayer; the sequence is IVVVICFVLFLTPVGSGTLMI. Residues 439-457 lie on the Cytoplasmic side of the membrane; that stretch reads ANLSSQGGSSDSDSPIWLR. The helical transmembrane segment at 458–478 threads the bilayer; it reads VFWSIAITIVSIGLLLAGSFS. Over 479–482 the chain is Periplasmic; it reads AMQS. Residues 483–503 traverse the membrane as a helical segment; it reads AVVLCGLPFSVILLLYMFGLA. The Cytoplasmic segment spans residues 504 to 526; that stretch reads KALKQETQQPVVESHTTETSGSD.

Belongs to the BCCT transporter (TC 2.A.15) family.

It is found in the cell inner membrane. Its function is as follows. Sodium-independent high-affinity choline uptake system. Uptake is not proton coupled. May play a role in metabolic adaptation to choline-containing environments. This is Osmo-independent choline transporter BetT1 from Acinetobacter baylyi (strain ATCC 33305 / BD413 / ADP1).